A 364-amino-acid polypeptide reads, in one-letter code: DNA polymerase IV (364 aa).

The region spanning 14–198 is the UmuC domain; that stretch reads IIHIDMDAFF…LPIEKFHGVG (185 aa). The Mg(2+) site is built by aspartate 18 and aspartate 116. Glutamate 117 is an active-site residue.

Belongs to the DNA polymerase type-Y family. As to quaternary structure, monomer. It depends on Mg(2+) as a cofactor.

It is found in the cytoplasm. The enzyme catalyses DNA(n) + a 2'-deoxyribonucleoside 5'-triphosphate = DNA(n+1) + diphosphate. In terms of biological role, poorly processive, error-prone DNA polymerase involved in untargeted mutagenesis. Copies undamaged DNA at stalled replication forks, which arise in vivo from mismatched or misaligned primer ends. These misaligned primers can be extended by PolIV. Exhibits no 3'-5' exonuclease (proofreading) activity. May be involved in translesional synthesis, in conjunction with the beta clamp from PolIII. In Streptococcus pyogenes serotype M1, this protein is DNA polymerase IV.